The sequence spans 523 residues: MTKGIDKYSIDSTDYTVGQDNVQKWGFDVHNPVFGISAGFIALFLVAALVLDAHTAKTALDGLKWKIIGSFDWLFIIAGNIFVIFCLALIVSPLGKIRLGGKDAVADYSFMSWLAMLFAAGMGIGLMFWSVAEPVAYFTGWYETPLGVEANSPEAARLALGATMFHWGLHPWAIYGVVALSLAFFTYNKGLPLSMRSIFYPLLGDRAWGWAGHIVDILAVLATLFGLATSLGLGAQQAASGIHHVFGVEPGLGLQIVVITVVTLLAVVSVVRGIDGGVKVISNINMVVAFLLLILVGLIGWAASLGSIPTTLMAYVENIIPLSNPFGRTDEAWFQGWTVFYWAWWISWSPFVGMFIARVSRGRTVREFITAVLIVPTVVTVVWMSVFGGLAIDQVVNKVGELGANGLTDVSLAMFQMFDVLPFGNILSIIAVVLVLVFFITSSDSGSLVIDSITAGGKVDAPVLQRVFWAFMEGAIAVALLWIGGSEAVQALQAGAISTALPFTFILLAMCVSLLMGMKTERQ.

Helical transmembrane passes span 33–53, 71–91, 109–129, 165–185, 214–234, 251–271, 286–306, 337–357, 372–392, 420–440, 467–487, and 496–516; these read VFGISAGFIALFLVAALVLDA, FDWLFIIAGNIFVIFCLALIV, SFMSWLAMLFAAGMGIGLMFW, FHWGLHPWAIYGVVALSLAFF, IVDILAVLATLFGLATSLGLG, GLGLQIVVITVVTLLAVVSVV, MVVAFLLLILVGLIGWAASLG, WTVFYWAWWISWSPFVGMFIA, VLIVPTVVTVVWMSVFGGLAI, VLPFGNILSIIAVVLVLVFFI, VFWAFMEGAIAVALLWIGGSE, and AISTALPFTFILLAMCVSLLM.

The protein belongs to the BCCT transporter (TC 2.A.15) family.

The protein resides in the cell inner membrane. Functionally, involved in the uptake of the osmoprotectant glycine betaine. This chain is Glycine betaine transporter 1, found in Vibrio parahaemolyticus serotype O3:K6 (strain RIMD 2210633).